Consider the following 361-residue polypeptide: MVPERGADPRKIIHVDMDAFYASVEQRDNPELRGKPLAVGGAAARGVVAAASYEARAFGVRSAMPSVTAKRKCPELIFVPPRFDVYRAVSAQIRDVFAEHTDLIEPLSLDEAYLDVTQNRLNISSATTIAEMIRAKILEVTGLTASAGISYNKFLAKMASDQNKPNGQFVITPRHGPAFVETLPVNKFHGVGPATAAKMEALGIETGADLKERSLSFLQQHFGKSGLWYYQIARAIDERAVDPDRPRKSIGAEDTFAADIVDLETSLAELKPLVAKVWGYCEGKGIRGRTVTLKIKFADFQQITRSRTVAVPIELSDFEHLAADLLGSVFPVRKGIRLLGVTLSSLGDVLPPDQRQLRFEL.

Residues 12–192 (IIHVDMDAFY…LPVNKFHGVG (181 aa)) enclose the UmuC domain. Positions 16 and 110 each coordinate Mg(2+). The active site involves Glu111.

Belongs to the DNA polymerase type-Y family. In terms of assembly, monomer. Requires Mg(2+) as cofactor.

It localises to the cytoplasm. It catalyses the reaction DNA(n) + a 2'-deoxyribonucleoside 5'-triphosphate = DNA(n+1) + diphosphate. Poorly processive, error-prone DNA polymerase involved in untargeted mutagenesis. Copies undamaged DNA at stalled replication forks, which arise in vivo from mismatched or misaligned primer ends. These misaligned primers can be extended by PolIV. Exhibits no 3'-5' exonuclease (proofreading) activity. May be involved in translesional synthesis, in conjunction with the beta clamp from PolIII. The protein is DNA polymerase IV 3 (dinB3) of Mesorhizobium japonicum (strain LMG 29417 / CECT 9101 / MAFF 303099) (Mesorhizobium loti (strain MAFF 303099)).